The sequence spans 318 residues: Protoheme IX farnesyltransferase (318 aa).

The next 9 helical transmembrane spans lie at 27-47 (IMML…GMTG), 52-72 (PAMA…AGAI), 103-123 (LTMG…ASNW), 124-144 (LAAA…TMWL), 152-172 (IVIG…AVTG), 179-199 (WILF…LSLL), 225-245 (ILVY…TGLG), 248-268 (IYGA…VAIL), and 288-308 (AFLF…VEHA).

It belongs to the UbiA prenyltransferase family. Protoheme IX farnesyltransferase subfamily. As to quaternary structure, interacts with CtaA.

Its subcellular location is the cell inner membrane. The catalysed reaction is heme b + (2E,6E)-farnesyl diphosphate + H2O = Fe(II)-heme o + diphosphate. Its pathway is porphyrin-containing compound metabolism; heme O biosynthesis; heme O from protoheme: step 1/1. In terms of biological role, converts heme B (protoheme IX) to heme O by substitution of the vinyl group on carbon 2 of heme B porphyrin ring with a hydroxyethyl farnesyl side group. This is Protoheme IX farnesyltransferase from Hyphomonas neptunium (strain ATCC 15444).